The primary structure comprises 447 residues: Multidrug efflux pump SdrM (447 aa).

Transmembrane regions (helical) follow at residues 6-26, 42-62, 70-90, 94-114, 134-154, 161-181, 194-214, 217-237, 260-280, 286-306, 323-342, 346-363, 392-412, and 418-438; these read IITVIALILIMFMSAIESSII, LISLIFTAYFIALVIANPIVG, IIYVAIAGLLLFSIGSFMCGL, FTMLIISRVIQGFGSGVLMSL, IVGSVWGISSIIGPLLGGGIL, WLFYINIPIAIIAIILVIWTF, FDTKGLTLFYVFIGLIMFALL, QLLLLNFLSFILAIVVAMCLF, VFITDLLTAICLMGFNLYIPV, LGLSPLQSGLVIFPLSVAWIT, IYLLSFTLLLVSSIIISFGI, VLIAFVLILAGLSFGYIY, LGASIGSTIMGYLYAIQSGIF, and NVLSAVAVISIGLIVLWVVFF.

Belongs to the major facilitator superfamily.

The protein localises to the cell membrane. In terms of biological role, energy-dependent drug efflux pump that increases resistance to antimicrobial agents such as norfloxacin, acriflavine and ethidium bromide. In Staphylococcus aureus (strain N315), this protein is Multidrug efflux pump SdrM.